The primary structure comprises 533 residues: L-aspartate oxidase 1 (533 aa).

Residues 10–13 (SGLA), lysine 32, 39–46 (ASDWAQGG), and aspartate 214 contribute to the FAD site. Arginine 281 acts as the Proton donor/acceptor in catalysis. Residues glutamate 366 and 382–383 (SL) contribute to the FAD site.

Belongs to the FAD-dependent oxidoreductase 2 family. NadB subfamily. FAD serves as cofactor.

Its subcellular location is the cytoplasm. It catalyses the reaction L-aspartate + O2 = iminosuccinate + H2O2. The protein operates within cofactor biosynthesis; NAD(+) biosynthesis; iminoaspartate from L-aspartate (oxidase route): step 1/1. Catalyzes the oxidation of L-aspartate to iminoaspartate, the first step in the de novo biosynthesis of NAD(+). This is L-aspartate oxidase 1 (nadB1) from Ralstonia nicotianae (strain ATCC BAA-1114 / GMI1000) (Ralstonia solanacearum).